The following is a 284-amino-acid chain: MTAQRIDGKAIAQSIRTQLKEKVTARKEAGQRVPGLAVILVGADPASQVYVGSKRRACEEVGFLSRSYDLDTTTSEAELLTLIDECNEDPAIDGILVQLPLPEHIEESKVIERIRPDKDVDGFHPYNVGRLAQRIPVLRSCTPMGIMTLIKTTGIDTYGLDAVIVGASNIVGRPMSLELLLAGCTTTTCHRFTRNLEQKVRQADLLVVAVGKPGFIPGEWIKPGAIVIDVGINRLEDGSLAGDVQFDAASENASFITPVPGGVGPMTIASLLENTLYAAEQYHD.

Residues 166-168 (GAS) and I232 contribute to the NADP(+) site.

It belongs to the tetrahydrofolate dehydrogenase/cyclohydrolase family. Homodimer.

It catalyses the reaction (6R)-5,10-methylene-5,6,7,8-tetrahydrofolate + NADP(+) = (6R)-5,10-methenyltetrahydrofolate + NADPH. It carries out the reaction (6R)-5,10-methenyltetrahydrofolate + H2O = (6R)-10-formyltetrahydrofolate + H(+). The protein operates within one-carbon metabolism; tetrahydrofolate interconversion. In terms of biological role, catalyzes the oxidation of 5,10-methylenetetrahydrofolate to 5,10-methenyltetrahydrofolate and then the hydrolysis of 5,10-methenyltetrahydrofolate to 10-formyltetrahydrofolate. The protein is Bifunctional protein FolD of Shewanella sediminis (strain HAW-EB3).